The primary structure comprises 132 residues: Large-conductance mechanosensitive channel (132 aa).

A run of 2 helical transmembrane segments spans residues 10–30 (FAVK…SAFG) and 76–96 (GNFI…FLAI).

It belongs to the MscL family. Homopentamer.

It localises to the cell inner membrane. In terms of biological role, channel that opens in response to stretch forces in the membrane lipid bilayer. May participate in the regulation of osmotic pressure changes within the cell. This Campylobacter hominis (strain ATCC BAA-381 / DSM 21671 / CCUG 45161 / LMG 19568 / NCTC 13146 / CH001A) protein is Large-conductance mechanosensitive channel.